A 107-amino-acid polypeptide reads, in one-letter code: Neuroparsin-A (107 aa).

The N-terminal stretch at 1–22 is a signal peptide; sequence MKATAALVAATLLLAVTLFHRA. The propeptide occupies 23–24; sequence ER.

In terms of assembly, homodimer; disulfide-linked.

Neurosparins are multifunctional neurohormones: they inhibit the effects of juvenile hormone, stimulate fluid reabsorption of isolated recta and induces an increase in hemolymph lipid and trehalose levels. The protein is Neuroparsin-A of Locusta migratoria (Migratory locust).